Consider the following 272-residue polypeptide: ATP synthase subunit a (272 aa).

Transmembrane regions (helical) follow at residues 42–62, 108–128, 140–162, 177–197, 219–239, and 241–261; these read IDSL…AGFV, FVWI…LPCI, ILPS…LMIF, LIYH…LEII, LIFI…LSVP, and AIFH…LTII.

The protein belongs to the ATPase A chain family. F-type ATPases have 2 components, CF(1) - the catalytic core - and CF(0) - the membrane proton channel. CF(1) has five subunits: alpha(3), beta(3), gamma(1), delta(1), epsilon(1). CF(0) has three main subunits: a(1), b(2) and c(9-12). The alpha and beta chains form an alternating ring which encloses part of the gamma chain. CF(1) is attached to CF(0) by a central stalk formed by the gamma and epsilon chains, while a peripheral stalk is formed by the delta and b chains.

Its subcellular location is the cell inner membrane. Functionally, key component of the proton channel; it plays a direct role in the translocation of protons across the membrane. The sequence is that of ATP synthase subunit a from Blochmanniella floridana.